A 136-amino-acid chain; its full sequence is NHL-repeat-containing protein 4 (136 aa).

NHL repeat units follow at residues 48 to 91 and 93 to 132; these read QPLG…FPRV and PPICLQLEGLKRPLGMACAPQGQLVVADAGDNCIKLYQYL.

This is NHL-repeat-containing protein 4 (Nhlrc4) from Mus musculus (Mouse).